The primary structure comprises 198 residues: Small ribosomal subunit protein uS7 (198 aa).

It belongs to the universal ribosomal protein uS7 family. Part of the 30S ribosomal subunit.

In terms of biological role, one of the primary rRNA binding proteins, it binds directly to 16S rRNA where it nucleates assembly of the head domain of the 30S subunit. Is located at the subunit interface close to the decoding center. The polypeptide is Small ribosomal subunit protein uS7 (Desulfurococcus mucosus (Desulfurococcus mobilis)).